The following is a 130-amino-acid chain: Small ribosomal subunit protein uS9 (130 aa).

The protein belongs to the universal ribosomal protein uS9 family.

The chain is Small ribosomal subunit protein uS9 from Hydrogenovibrio crunogenus (strain DSM 25203 / XCL-2) (Thiomicrospira crunogena).